The primary structure comprises 91 residues: MGAMSPWHWAIVALVVIILFGSKKLPDAARGLGRSLRIFKSEVKEMQNDNSTPAPTAQQSAPAELPVADTTTAPVTPPAPVQPQHTEPKSA.

Residues methionine 1–glycine 21 traverse the membrane as a helical segment. Residues lysine 44 to alanine 91 form a disordered region. The segment covering serine 51 to proline 74 has biased composition (low complexity).

Belongs to the TatA/E family. In terms of assembly, the Tat system comprises two distinct complexes: a TatABC complex, containing multiple copies of TatA, TatB and TatC subunits, and a separate TatA complex, containing only TatA subunits. Substrates initially bind to the TatABC complex, which probably triggers association of the separate TatA complex to form the active translocon.

It localises to the cell membrane. Functionally, part of the twin-arginine translocation (Tat) system that transports large folded proteins containing a characteristic twin-arginine motif in their signal peptide across membranes. TatA could form the protein-conducting channel of the Tat system. The protein is Sec-independent protein translocase protein TatA of Rhodococcus jostii (strain RHA1).